Here is a 213-residue protein sequence, read N- to C-terminus: Thiamine-phosphate synthase (213 aa).

Residues glutamine 39–lysine 43 and asparagine 71 each bind 4-amino-2-methyl-5-(diphosphooxymethyl)pyrimidine. Positions 72 and 91 each coordinate Mg(2+). Serine 110 serves as a coordination point for 4-amino-2-methyl-5-(diphosphooxymethyl)pyrimidine. Threonine 136–threonine 138 contacts 2-[(2R,5Z)-2-carboxy-4-methylthiazol-5(2H)-ylidene]ethyl phosphate. Lysine 139 is a 4-amino-2-methyl-5-(diphosphooxymethyl)pyrimidine binding site. 2-[(2R,5Z)-2-carboxy-4-methylthiazol-5(2H)-ylidene]ethyl phosphate contacts are provided by residues glycine 166 and valine 186–serine 187.

The protein belongs to the thiamine-phosphate synthase family. Mg(2+) serves as cofactor.

The enzyme catalyses 2-[(2R,5Z)-2-carboxy-4-methylthiazol-5(2H)-ylidene]ethyl phosphate + 4-amino-2-methyl-5-(diphosphooxymethyl)pyrimidine + 2 H(+) = thiamine phosphate + CO2 + diphosphate. It catalyses the reaction 2-(2-carboxy-4-methylthiazol-5-yl)ethyl phosphate + 4-amino-2-methyl-5-(diphosphooxymethyl)pyrimidine + 2 H(+) = thiamine phosphate + CO2 + diphosphate. It carries out the reaction 4-methyl-5-(2-phosphooxyethyl)-thiazole + 4-amino-2-methyl-5-(diphosphooxymethyl)pyrimidine + H(+) = thiamine phosphate + diphosphate. It functions in the pathway cofactor biosynthesis; thiamine diphosphate biosynthesis; thiamine phosphate from 4-amino-2-methyl-5-diphosphomethylpyrimidine and 4-methyl-5-(2-phosphoethyl)-thiazole: step 1/1. In terms of biological role, condenses 4-methyl-5-(beta-hydroxyethyl)thiazole monophosphate (THZ-P) and 2-methyl-4-amino-5-hydroxymethyl pyrimidine pyrophosphate (HMP-PP) to form thiamine monophosphate (TMP). The polypeptide is Thiamine-phosphate synthase (Clostridium botulinum (strain Eklund 17B / Type B)).